A 200-amino-acid polypeptide reads, in one-letter code: Probable E3 ubiquitin-protein ligase ATL45 (200 aa).

A helical membrane pass occupies residues 26 to 46 (MVVILSALLCALVCVAGLAAV). Residues 113–155 (CAICITEFSEGEEIRILPLCSHAFHVACIDKWLTSRSSCPSCR) form an RING-type; atypical zinc finger.

This sequence belongs to the RING-type zinc finger family. ATL subfamily. As to quaternary structure, interacts with BIK1.

It is found in the membrane. The enzyme catalyses S-ubiquitinyl-[E2 ubiquitin-conjugating enzyme]-L-cysteine + [acceptor protein]-L-lysine = [E2 ubiquitin-conjugating enzyme]-L-cysteine + N(6)-ubiquitinyl-[acceptor protein]-L-lysine.. It participates in protein modification; protein ubiquitination. Functionally, E3 ubiquitin-protein ligase that possess E3 ubiquitin ligase activity in vitro and mediates protein monoubiquitination. Triggers the monoubiquitination of phosphorylated BIK1 in response to pathogen-associated molecular pattern (PAMP) detection. May be involved in the early steps of the plant defense signaling pathway. The sequence is that of Probable E3 ubiquitin-protein ligase ATL45 from Arabidopsis thaliana (Mouse-ear cress).